The primary structure comprises 367 residues: MGPSNEHSSGHRNNFDLLRLFAACQVMFSHAWNWLHLGDPLNGTWVFDLLFSAPGVAIFFLISGFLVTDSYIRSSSAASFFVKRSLRIFPALFVNIAVMELALLVTGGLNVTGILQYLFYFTVYILTAARIWAVYFTYEPYTMSGFYGASDPSGVLWTLTVELTFYLTLPMLLEIWRRWKRAGALVVAVAALGSWVMAQHFNITDKYNPFLSVTAGPTFWIFSMGVLARLYWHRVSKIFEGKLLWWLATHLAITWWVAGTSAAFISINNAAPVDAFRIAVLAGLVLSAAHSLPRPNLLRRQDLSYGIYLYHMLVMHTLIAIGWVGHWWLWIVEPVGTVALAALSWALIEQPAMKLRTSLVARRLSVA.

The next 11 helical transmembrane spans lie at phenylalanine 15–leucine 37, valine 46–leucine 66, isoleucine 88–glycine 108, leucine 109–alanine 129, valine 155–isoleucine 175, glycine 183–isoleucine 203, asparagine 208–alanine 228, tryptophan 245–isoleucine 265, alanine 270–histidine 290, methionine 312–valine 332, and valine 335–leucine 355.

This sequence belongs to the acyltransferase 3 family.

It localises to the cell membrane. In terms of biological role, not known. NodX allows Rhizobium leguminosarum biovar viciae strain TOM to nodulate Afghanistan peas. This chain is Nodulation protein 10 (nodX), found in Rhizobium leguminosarum bv. viciae.